A 184-amino-acid chain; its full sequence is MMKLMFASDIHGSLPATERVLELFAQSGAQWLVILGDVLNHGPRNALPEGYAPAKVAERLNEVAHKVIAVRGNCDSEVDQMLLHFPITAPWQQVLLEKQRLFLTHGHLFGPENLPALNQNDVLVYGHTHLPVAEQRGEIFHFNPGSVSIPKGGNPASYGMLDNDVLSVIALNDQSIIAQVAINP.

7 residues coordinate Mn(2+): Asp-9, His-11, Asp-37, Asn-73, His-105, His-127, and His-129.

This sequence belongs to the metallophosphoesterase superfamily. YfcE family. It depends on Mn(2+) as a cofactor.

Shows phosphodiesterase activity. The sequence is that of Phosphodiesterase YfcE (yfcE) from Escherichia coli O157:H7.